We begin with the raw amino-acid sequence, 77 residues long: Conotoxin PnMKLT1-0122 (77 aa).

Positions Met1–Ala22 are cleaved as a signal peptide. Positions Glu23–Asn49 are excised as a propeptide. Intrachain disulfides connect Cys52–Cys67, Cys59–Cys71, and Cys66–Cys76.

It belongs to the conotoxin O1 superfamily. In terms of tissue distribution, expressed by the venom duct.

The protein resides in the secreted. The chain is Conotoxin PnMKLT1-0122 from Conus pennaceus (Feathered cone).